Here is a 722-residue protein sequence, read N- to C-terminus: MASCPDSDNSWVLAGSETLPVETLGPESRVDPESEEAPQALQDSSKADGKESAGTLNGEEMLFQTESSQGEGAALPEESEAKGALGGDDGHGTKRPGDTAVQEDLQETPMVTSLGPDTQDLERNIHPQNLPSSPRAVWKEHGCSSSDDDTDVDVEGLRRRRGREPSPPQPTAAVDGEDQAKGEGIGELGISLNMCFLGALVLLGLGILLFSGALLEPETEPVEEAELQVFPETELVQTVGNRQDEVEQLQASVPPDSVPSLQSMGLLLDKLAKENQDIRLLQAQLQAQKEELQSLLHQPKGLEEENARLREALQQGKTSHQALESELQQLRARLQGLEANCVRGVDGVCLNWGGSPQGGKATTEQGHKGQEPDTSLLEQHKQLEAEAKALRQELQKQWQLLGSVHRNLQRGLQDAGQGAPAHAGLAELGHMLAQTLQGLESQGINTGRSSNDSEAWHQKKPRFQHPREWSGREKWRGGQRDQKAEHWKLKKEESGQDRKKSWRDEGREFTGHWKENRPRAEESGSRKDSKRQDPKVHPRKSGNSHSGERQKHSWGKDNSPDSVSWEELLRRKYRPPQGCSGVADCARQEGLALFGVELAPVRQQELASVLREYLARLPWAGQLTKELPLSPAYFGEDGIFRHDRLRFRDFVDALEDSLEEVALKQTGDDDEVDDFEDFIFSHFFGDKALKRRSKKKEKQPWNHRAVGPREEHSRHPHHYHQG.

Polar residues predominate over residues 1–10 (MASCPDSDNS). The tract at residues 1-180 (MASCPDSDNS…TAAVDGEDQA (180 aa)) is disordered. A compositionally biased stretch (basic and acidic residues) spans 88–97 (DDGHGTKRPG). 4 positions are modified to phosphoserine: Ser-133, Ser-144, Ser-145, and Ser-146. A Phosphothreonine modification is found at Thr-150. Ser-166 bears the Phosphoserine mark. 2 coiled-coil regions span residues 266–346 (LLLD…RGVD) and 373–401 (DTSL…WQLL). The segment covering 442 to 453 (QGINTGRSSNDS) has biased composition (polar residues). Disordered stretches follow at residues 442-562 (QGIN…SPDS) and 691-722 (RRSK…YHQG). Basic and acidic residues-rich tracts occupy residues 465–536 (HPRE…DPKV) and 546–559 (SGER…KDNS). A Nuclear localization signal motif is present at residues 482–502 (QKAEHWKLKKEESGQDRKKSW). Ser-559 is subject to Phosphoserine. The Nuclear localization signal motif lies at 686 to 711 (DKALKRRSKKKEKQPWNHRAVGPREE).

Interacts with ESR1, PBX1, PBX2 and PBX3. Interacts with TEX11.

It is found in the cytoplasm. The protein resides in the cytoskeleton. It localises to the nucleus. Regulator of pre-B-cell leukemia transcription factors (BPXs) function. Inhibits the binding of PBX1-HOX complex to DNA and blocks the transcriptional activity of E2A-PBX1. Tethers estrogen receptor-alpha (ESR1) to microtubules and allows them to influence estrogen receptors-alpha signaling. The polypeptide is Pre-B-cell leukemia transcription factor-interacting protein 1 (Pbxip1) (Rattus norvegicus (Rat)).